Here is a 427-residue protein sequence, read N- to C-terminus: Transcobalamin-2 (427 aa).

An N-terminal signal peptide occupies residues Met1–Ala18. 3 disulfides stabilise this stretch: Cys21/Cys268, Cys116/Cys310, and Cys165/Cys208. Residues Thr152 to Gln156, His193, His193 to Asp197, Asn245, Ser248, Gln292, and Trp395 to Leu397 each bind cob(II)alamin.

Belongs to the eukaryotic cobalamin transport proteins family. In terms of assembly, interacts with CD320 (via LDL-receptor class A domains).

The protein localises to the secreted. In terms of biological role, primary vitamin B12-binding and transport protein. Delivers cobalamin to cells. In Rattus norvegicus (Rat), this protein is Transcobalamin-2 (Tcn2).